The sequence spans 398 residues: Putative F-box protein At4g17780 (398 aa).

The F-box domain occupies 8–55; sequence PSSIYIVADLLEDIFLRLPLKSILISKSVSKRWRSILESKTFVERRMS.

The sequence is that of Putative F-box protein At4g17780 from Arabidopsis thaliana (Mouse-ear cress).